The sequence spans 520 residues: GMP synthase [glutamine-hydrolyzing] (520 aa).

The region spanning K12 to D205 is the Glutamine amidotransferase type-1 domain. C89 serves as the catalytic Nucleophile. Residues H179 and E181 contribute to the active site. Residues W206–R395 form the GMPS ATP-PPase domain. An ATP-binding site is contributed by S233 to S239.

In terms of assembly, homodimer.

It catalyses the reaction XMP + L-glutamine + ATP + H2O = GMP + L-glutamate + AMP + diphosphate + 2 H(+). It participates in purine metabolism; GMP biosynthesis; GMP from XMP (L-Gln route): step 1/1. Catalyzes the synthesis of GMP from XMP. This is GMP synthase [glutamine-hydrolyzing] from Streptococcus equi subsp. equi (strain 4047).